We begin with the raw amino-acid sequence, 121 residues long: Small ribosomal subunit protein uS13 (121 aa).

Residues 97–121 form a disordered region; sequence VRGQRTRTNARTRRGARKTVAGKKK. Over residues 100 to 121 the composition is skewed to basic residues; that stretch reads QRTRTNARTRRGARKTVAGKKK.

It belongs to the universal ribosomal protein uS13 family. As to quaternary structure, part of the 30S ribosomal subunit. Forms a loose heterodimer with protein S19. Forms two bridges to the 50S subunit in the 70S ribosome.

Located at the top of the head of the 30S subunit, it contacts several helices of the 16S rRNA. In the 70S ribosome it contacts the 23S rRNA (bridge B1a) and protein L5 of the 50S subunit (bridge B1b), connecting the 2 subunits; these bridges are implicated in subunit movement. Contacts the tRNAs in the A and P-sites. This Synechococcus sp. (strain CC9311) protein is Small ribosomal subunit protein uS13.